Reading from the N-terminus, the 232-residue chain is 5'-methylthioadenosine/S-adenosylhomocysteine nucleosidase (232 aa).

Glu12 functions as the Proton acceptor in the catalytic mechanism. Residues Gly78, Ile152, and 173-174 (ME) contribute to the substrate site. The Proton donor role is filled by Asp197.

Belongs to the PNP/UDP phosphorylase family. MtnN subfamily. As to quaternary structure, homodimer.

The catalysed reaction is S-adenosyl-L-homocysteine + H2O = S-(5-deoxy-D-ribos-5-yl)-L-homocysteine + adenine. The enzyme catalyses S-methyl-5'-thioadenosine + H2O = 5-(methylsulfanyl)-D-ribose + adenine. It catalyses the reaction 5'-deoxyadenosine + H2O = 5-deoxy-D-ribose + adenine. It functions in the pathway amino-acid biosynthesis; L-methionine biosynthesis via salvage pathway; S-methyl-5-thio-alpha-D-ribose 1-phosphate from S-methyl-5'-thioadenosine (hydrolase route): step 1/2. In terms of biological role, catalyzes the irreversible cleavage of the glycosidic bond in both 5'-methylthioadenosine (MTA) and S-adenosylhomocysteine (SAH/AdoHcy) to adenine and the corresponding thioribose, 5'-methylthioribose and S-ribosylhomocysteine, respectively. Also cleaves 5'-deoxyadenosine, a toxic by-product of radical S-adenosylmethionine (SAM) enzymes, into 5-deoxyribose and adenine. Thus, is required for in vivo function of the radical SAM enzymes biotin synthase and lipoic acid synthase, that are inhibited by 5'-deoxyadenosine accumulation. This chain is 5'-methylthioadenosine/S-adenosylhomocysteine nucleosidase, found in Erwinia tasmaniensis (strain DSM 17950 / CFBP 7177 / CIP 109463 / NCPPB 4357 / Et1/99).